Here is a 99-residue protein sequence, read N- to C-terminus: MRIERLYEVVRAPHISEKSTLAAEERNEVVFKVAVDARKAEIRQAVEQLFDVKVRDVRTVKMKGKRKRFGRLEGKRPDWKKAYVTLEEGNEIDFLGGAE.

Belongs to the universal ribosomal protein uL23 family. As to quaternary structure, part of the 50S ribosomal subunit. Contacts protein L29, and trigger factor when it is bound to the ribosome.

Its function is as follows. One of the early assembly proteins it binds 23S rRNA. One of the proteins that surrounds the polypeptide exit tunnel on the outside of the ribosome. Forms the main docking site for trigger factor binding to the ribosome. The protein is Large ribosomal subunit protein uL23 of Alkalilimnicola ehrlichii (strain ATCC BAA-1101 / DSM 17681 / MLHE-1).